A 428-amino-acid polypeptide reads, in one-letter code: Elongation factor 1-alpha (428 aa).

The region spanning 5–217 (KPHVNIVFIG…DQIPEPEKPV (213 aa)) is the tr-type G domain. Positions 14–21 (GHVDHGKS) are G1. Position 14-21 (14-21 (GHVDHGKS)) interacts with GTP. A Mg(2+)-binding site is contributed by serine 21. The interval 68-72 (GITID) is G2. The tract at residues 89-92 (DAPG) is G3. Residues 89-93 (DAPGH) and 144-147 (NKMD) contribute to the GTP site. Residues 144 to 147 (NKMD) form a G4 region. Residues 181 to 183 (SAW) form a G5 region.

This sequence belongs to the TRAFAC class translation factor GTPase superfamily. Classic translation factor GTPase family. EF-Tu/EF-1A subfamily.

Its subcellular location is the cytoplasm. It catalyses the reaction GTP + H2O = GDP + phosphate + H(+). Its function is as follows. GTP hydrolase that promotes the GTP-dependent binding of aminoacyl-tRNA to the A-site of ribosomes during protein biosynthesis. The chain is Elongation factor 1-alpha from Pyrococcus abyssi (strain GE5 / Orsay).